Consider the following 61-residue polypeptide: MAKKSLKIKQARTQKYSTREYSRCKICGRPHAYLRKFGVCRICFRELAYKGQIPGVRKASW.

Positions 24, 27, 40, and 43 each coordinate Zn(2+).

It belongs to the universal ribosomal protein uS14 family. Zinc-binding uS14 subfamily. In terms of assembly, part of the 30S ribosomal subunit. Contacts proteins S3 and S10. Requires Zn(2+) as cofactor.

Its function is as follows. Binds 16S rRNA, required for the assembly of 30S particles and may also be responsible for determining the conformation of the 16S rRNA at the A site. The protein is Small ribosomal subunit protein uS14 of Alkaliphilus metalliredigens (strain QYMF).